Here is a 189-residue protein sequence, read N- to C-terminus: Bilin-binding protein (189 aa).

The signal sequence occupies residues 1–15 (MQYLIVLALVAAASA). Intrachain disulfides connect C23-C130 and C57-C185.

This sequence belongs to the calycin superfamily. Lipocalin family. As to quaternary structure, homotetramer. As to expression, hemolymph.

Its subcellular location is the secreted. Functionally, this protein binds the blue pigments bilins. This chain is Bilin-binding protein, found in Pieris brassicae (White butterfly).